Here is a 460-residue protein sequence, read N- to C-terminus: uncharacterized protein (460 aa).

In terms of domain architecture, TRAM spans 6 to 64 (PVKKNSTYNLYITGMGTKGEGIGKINNFTIFVTGAILGEEVEVNIIKVNKNYAVGKLLN). [4Fe-4S] cluster is bound by residues Cys-77, Cys-83, Cys-86, and Cys-163. S-adenosyl-L-methionine-binding residues include Gln-287, Tyr-316, Glu-337, and Asp-385. Cys-412 acts as the Nucleophile in catalysis.

Belongs to the class I-like SAM-binding methyltransferase superfamily. RNA M5U methyltransferase family.

This is an uncharacterized protein from Clostridium tetani (strain Massachusetts / E88).